Here is a 226-residue protein sequence, read N- to C-terminus: Ribonuclease 3 (226 aa).

The RNase III domain maps to 7-129 (LPRLCRTLGY…IIGAIYLDSD (123 aa)). Position 42 (E42) interacts with Mg(2+). The active site involves D46. Mg(2+) contacts are provided by D115 and E118. E118 is a catalytic residue. One can recognise a DRBM domain in the interval 156 to 226 (DAKTLLQEYL…AAQVLELLKK (71 aa)).

It belongs to the ribonuclease III family. As to quaternary structure, homodimer. Mg(2+) serves as cofactor.

The protein localises to the cytoplasm. The enzyme catalyses Endonucleolytic cleavage to 5'-phosphomonoester.. In terms of biological role, digests double-stranded RNA. Involved in the processing of primary rRNA transcript to yield the immediate precursors to the large and small rRNAs (23S and 16S). Processes some mRNAs, and tRNAs when they are encoded in the rRNA operon. Processes pre-crRNA and tracrRNA of type II CRISPR loci if present in the organism. The protein is Ribonuclease 3 of Shewanella sp. (strain W3-18-1).